The sequence spans 327 residues: tRNA dimethylallyltransferase (327 aa).

Residue 14 to 21 (GPTASGKT) coordinates ATP. 16–21 (TASGKT) contacts substrate. Interaction with substrate tRNA regions lie at residues 39–42 (DSAL) and 163–167 (QRIQR).

Belongs to the IPP transferase family. As to quaternary structure, monomer. Mg(2+) serves as cofactor.

It carries out the reaction adenosine(37) in tRNA + dimethylallyl diphosphate = N(6)-dimethylallyladenosine(37) in tRNA + diphosphate. Catalyzes the transfer of a dimethylallyl group onto the adenine at position 37 in tRNAs that read codons beginning with uridine, leading to the formation of N6-(dimethylallyl)adenosine (i(6)A). The chain is tRNA dimethylallyltransferase from Xanthomonas axonopodis pv. citri (strain 306).